The primary structure comprises 149 residues: Arginine repressor (149 aa).

This sequence belongs to the ArgR family.

It is found in the cytoplasm. Its pathway is amino-acid biosynthesis; L-arginine biosynthesis [regulation]. Its function is as follows. Regulates arginine biosynthesis genes. This chain is Arginine repressor, found in Bacillus pumilus (strain SAFR-032).